Here is a 175-residue protein sequence, read N- to C-terminus: ADP-ribosylation factor 6 (175 aa).

Gly2 is lipidated: N-myristoyl glycine. Lys3 carries N6-myristoyl lysine lipidation. GTP is bound by residues 23-28 (AAGKTT), 41-44 (TIPT), 63-67 (DVGGQ), 122-125 (NKQD), and 155-156 (CA).

It belongs to the small GTPase superfamily. Arf family.

Its subcellular location is the cytoplasm. It is found in the cytosol. The protein localises to the cell membrane. It localises to the endosome membrane. The protein resides in the recycling endosome membrane. Its subcellular location is the cell projection. It is found in the filopodium membrane. The protein localises to the ruffle. It localises to the cleavage furrow. The protein resides in the midbody. Its subcellular location is the midbody ring. The catalysed reaction is GTP + H2O = GDP + phosphate + H(+). GTP-binding protein involved in protein trafficking; regulates endocytic recycling and cytoskeleton remodeling. May modulate vesicle budding and uncoating within the Golgi apparatus. May contribute to the regulation of dendritic branching, filopodia extension and dendritic spine development. This is ADP-ribosylation factor 6 (ARF6) from Gallus gallus (Chicken).